We begin with the raw amino-acid sequence, 60 residues long: Large ribosomal subunit protein bL32 (60 aa).

Residues 1–20 show a composition bias toward basic residues; that stretch reads MACPKKKTSKSKRSMRRAAW. Positions 1 to 22 are disordered; it reads MACPKKKTSKSKRSMRRAAWKR.

Belongs to the bacterial ribosomal protein bL32 family.

The protein is Large ribosomal subunit protein bL32 of Thermosynechococcus vestitus (strain NIES-2133 / IAM M-273 / BP-1).